The chain runs to 226 residues: Putative DNA repair protein recA homolog 4 (226 aa).

41 to 48 is a binding site for ATP; sequence GPEASGKT.

Belongs to the RecA family.

Its subcellular location is the cytoplasm. Functionally, involved in recombination ability and DNA strand transfer activity. The sequence is that of Putative DNA repair protein recA homolog 4 from Arabidopsis thaliana (Mouse-ear cress).